Here is a 245-residue protein sequence, read N- to C-terminus: Demethylmenaquinone methyltransferase (245 aa).

S-adenosyl-L-methionine is bound by residues threonine 58, aspartate 79, and 106–107 (NA).

The protein belongs to the class I-like SAM-binding methyltransferase superfamily. MenG/UbiE family.

The catalysed reaction is a 2-demethylmenaquinol + S-adenosyl-L-methionine = a menaquinol + S-adenosyl-L-homocysteine + H(+). The protein operates within quinol/quinone metabolism; menaquinone biosynthesis; menaquinol from 1,4-dihydroxy-2-naphthoate: step 2/2. Methyltransferase required for the conversion of demethylmenaquinol (DMKH2) to menaquinol (MKH2). The chain is Demethylmenaquinone methyltransferase from Halalkalibacterium halodurans (strain ATCC BAA-125 / DSM 18197 / FERM 7344 / JCM 9153 / C-125) (Bacillus halodurans).